Reading from the N-terminus, the 197-residue chain is Predicted GPI-anchored protein 34 (197 aa).

The N-terminal stretch at 1-20 (MKFTSLICSSILLIIPTVMA) is a signal peptide. Residues Asn-110, Asn-114, and Asn-152 are each glycosylated (N-linked (GlcNAc...) asparagine). A lipid anchor (GPI-anchor amidated glycine) is attached at Gly-169. Residues 170 to 197 (AAAMAGPVPILTNSIFTAGLLALAAVLL) constitute a propeptide, removed in mature form.

The protein localises to the cell membrane. Predicted GPI-anchored protein which may have a role during host infection. This Candida albicans (strain SC5314 / ATCC MYA-2876) (Yeast) protein is Predicted GPI-anchored protein 34 (PGA34).